A 192-amino-acid chain; its full sequence is MNEYLLLLISTVLVNNFVLVKFLGLCPFMGVSSKLESAIGMSMATTFVLTLASILSYLVNQYLLLPFDLSYLRTMSFILVIAVVVQFTEMVVQKTSAALHRALGIYLPLITTNCAVLGVALLNVNEKHDFIQSAIFGFGAALGFSLVLILFSAMRERLAAADVPLPFKGGAIAMITAGLMSLAFMGFTGLVK.

The next 6 helical transmembrane spans lie at 5–25 (LLLL…FLGL), 39–59 (IGMS…SYLV), 65–85 (LPFD…AVVV), 102–122 (ALGI…VALL), 134–154 (AIFG…FSAM), and 171–191 (AIAM…TGLV).

This sequence belongs to the NqrDE/RnfAE family. As to quaternary structure, the complex is composed of six subunits: RnfA, RnfB, RnfC, RnfD, RnfE and RnfG.

The protein resides in the cell inner membrane. Part of a membrane-bound complex that couples electron transfer with translocation of ions across the membrane. This is Ion-translocating oxidoreductase complex subunit A from Shewanella baltica (strain OS223).